Consider the following 37-residue polypeptide: Large ribosomal subunit protein bL36 (37 aa).

This sequence belongs to the bacterial ribosomal protein bL36 family.

This is Large ribosomal subunit protein bL36 from Leptospira biflexa serovar Patoc (strain Patoc 1 / Ames).